The sequence spans 96 residues: Protein Vpr (96 aa).

Residues 1–42 form a homooligomerization region; sequence MEQAPEDQGPQREPYNEWTLELLEELKNEAVRHFPRPWLHGL. Residue serine 79 is modified to Phosphoserine; by host.

The protein belongs to the HIV-1 VPR protein family. Homooligomer, may form homodimer. Interacts with p6-gag region of the Pr55 Gag precursor protein through a (Leu-X-X)4 motif near the C-terminus of the P6gag protein. Interacts with host UNG. May interact with host RAD23A/HHR23A. Interacts with host VPRBP/DCAF1, leading to hijack the CUL4A-RBX1-DDB1-DCAF1/VPRBP complex, mediating ubiquitination of host proteins such as TERT and ZGPAT and arrest of the cell cycle in G2 phase. In terms of processing, phosphorylated on several residues by host. These phosphorylations regulate VPR activity for the nuclear import of the HIV-1 pre-integration complex.

The protein resides in the virion. It is found in the host nucleus. The protein localises to the host extracellular space. Functionally, during virus replication, may deplete host UNG protein, and incude G2-M cell cycle arrest. Acts by targeting specific host proteins for degradation by the 26S proteasome, through association with the cellular CUL4A-DDB1 E3 ligase complex by direct interaction with host VPRPB/DCAF-1. Cell cycle arrest reportedly occurs within hours of infection and is not blocked by antiviral agents, suggesting that it is initiated by the VPR carried into the virion. Additionally, VPR induces apoptosis in a cell cycle dependent manner suggesting that these two effects are mechanistically linked. Detected in the serum and cerebrospinal fluid of AIDS patient, VPR may also induce cell death to bystander cells. In terms of biological role, during virus entry, plays a role in the transport of the viral pre-integration (PIC) complex to the host nucleus. This function is crucial for viral infection of non-dividing macrophages. May act directly at the nuclear pore complex, by binding nucleoporins phenylalanine-glycine (FG)-repeat regions. The polypeptide is Protein Vpr (Human immunodeficiency virus type 1 group M subtype G (isolate 92NG083) (HIV-1)).